Consider the following 481-residue polypeptide: Protein nucleotidyltransferase YdiU (481 aa).

Residues G85, G87, R88, K108, D120, G121, R172, and R179 each coordinate ATP. The active-site Proton acceptor is D248. 2 residues coordinate Mg(2+): N249 and D258. Position 258 (D258) interacts with ATP.

This sequence belongs to the SELO family. Mg(2+) is required as a cofactor. Requires Mn(2+) as cofactor.

It carries out the reaction L-seryl-[protein] + ATP = 3-O-(5'-adenylyl)-L-seryl-[protein] + diphosphate. It catalyses the reaction L-threonyl-[protein] + ATP = 3-O-(5'-adenylyl)-L-threonyl-[protein] + diphosphate. The enzyme catalyses L-tyrosyl-[protein] + ATP = O-(5'-adenylyl)-L-tyrosyl-[protein] + diphosphate. The catalysed reaction is L-histidyl-[protein] + UTP = N(tele)-(5'-uridylyl)-L-histidyl-[protein] + diphosphate. It carries out the reaction L-seryl-[protein] + UTP = O-(5'-uridylyl)-L-seryl-[protein] + diphosphate. It catalyses the reaction L-tyrosyl-[protein] + UTP = O-(5'-uridylyl)-L-tyrosyl-[protein] + diphosphate. Its function is as follows. Nucleotidyltransferase involved in the post-translational modification of proteins. It can catalyze the addition of adenosine monophosphate (AMP) or uridine monophosphate (UMP) to a protein, resulting in modifications known as AMPylation and UMPylation. The chain is Protein nucleotidyltransferase YdiU from Cereibacter sphaeroides (strain ATCC 17029 / ATH 2.4.9) (Rhodobacter sphaeroides).